The following is a 603-amino-acid chain: Trihelix transcription factor DF1 (603 aa).

The 59-residue stretch at 60 to 118 (NRWPRQETLALLKIRSDMGIAFRDASVKGPLWEEVSRKMAEHGYIRNAKKCKEKFENVY) folds into the Myb-like 1 domain. Disordered regions lie at residues 149–201 (QSTT…SSIP), 220–249 (LSDN…TRKK), 333–408 (KQPN…SSSR), and 532–603 (QWPP…TNNL). 4 stretches are compositionally biased toward low complexity: residues 168–178 (NNNNNNNNNNN), 189–198 (TTVMPTLPSS), 221–236 (SDNS…TSSD), and 344–362 (PQQV…QQPP). Pro residues predominate over residues 363–376 (QRSPPPQPPAPLPQ). Positions 381–408 (VVSTLDTTKTDNGGDQNMTPAASASSSR) are enriched in polar residues. The Myb-like 2 domain occupies 401–465 (AASASSSRWP…RCKEKWENIN (65 aa)). Residues 532–555 (QWPPAVTTATTTPAAAQPDQQSQP) are compositionally biased toward low complexity. The span at 559-586 (NFDDEEGTDEEYDDEDEEEENEEEEGGE) shows a compositional bias: acidic residues. The span at 593–603 (NNNNNKTTNNL) shows a compositional bias: low complexity.

Its subcellular location is the nucleus. Its function is as follows. Transcription repressor that negatively regulates root hair growth by directly binding RSL4 promoter and repressing RSL4 expression. Required for the synthesis of seed coat mucilage. This chain is Trihelix transcription factor DF1, found in Arabidopsis thaliana (Mouse-ear cress).